Here is a 198-residue protein sequence, read N- to C-terminus: Secreted RxLR effector protein PITG_22926 (198 aa).

Positions 1–20 (MLRSFLLIVATVSLFGQCKP) are cleaved as a signal peptide. Residues 43–52 (RFLRTNDEER) carry the RxLR-dEER motif.

It belongs to the RxLR effector family. As to quaternary structure, interacts with host MAP3Kbeta2 in the nucleoplasm.

It localises to the secreted. It is found in the host nucleus. The protein resides in the host nucleolus. Functionally, secreted effector that promotes P.infestans colonization of plant host. Specifically suppresses Avr4/Cf4- and AvrPto/Pto-triggered cell death. Targets the potato MAP3Kbeta2 kinase, a positive regulator of cell death associated with plant immunity, and perturbs signaling pathways triggered by MAP3Kbeta2. The polypeptide is Secreted RxLR effector protein PITG_22926 (Phytophthora infestans (strain T30-4) (Potato late blight agent)).